Reading from the N-terminus, the 450-residue chain is Tubulin beta-3 chain (450 aa).

GTP is bound by residues glutamine 11, glutamate 69, serine 138, glycine 142, threonine 143, glycine 144, asparagine 204, and asparagine 226. Residue glutamate 69 coordinates Mg(2+). The segment at 420-450 (SEYQQYQDATADEEGDYEDEEEGEYQQEEEY) is disordered. The span at 429 to 450 (TADEEGDYEDEEEGEYQQEEEY) shows a compositional bias: acidic residues.

The protein belongs to the tubulin family. As to quaternary structure, dimer of alpha and beta chains. A typical microtubule is a hollow water-filled tube with an outer diameter of 25 nm and an inner diameter of 15 nM. Alpha-beta heterodimers associate head-to-tail to form protofilaments running lengthwise along the microtubule wall with the beta-tubulin subunit facing the microtubule plus end conferring a structural polarity. Microtubules usually have 13 protofilaments but different protofilament numbers can be found in some organisms and specialized cells. Requires Mg(2+) as cofactor.

It is found in the cytoplasm. It localises to the cytoskeleton. Functionally, tubulin is the major constituent of microtubules, a cylinder consisting of laterally associated linear protofilaments composed of alpha- and beta-tubulin heterodimers. Microtubules grow by the addition of GTP-tubulin dimers to the microtubule end, where a stabilizing cap forms. Below the cap, tubulin dimers are in GDP-bound state, owing to GTPase activity of alpha-tubulin. The protein is Tubulin beta-3 chain (TUBB3) of Arabidopsis thaliana (Mouse-ear cress).